Consider the following 126-residue polypeptide: Large ribosomal subunit protein bL19 (126 aa).

It belongs to the bacterial ribosomal protein bL19 family.

Its function is as follows. This protein is located at the 30S-50S ribosomal subunit interface and may play a role in the structure and function of the aminoacyl-tRNA binding site. The protein is Large ribosomal subunit protein bL19 of Bordetella petrii (strain ATCC BAA-461 / DSM 12804 / CCUG 43448).